Reading from the N-terminus, the 498-residue chain is Resveratrol cleavage oxygenase 1 (498 aa).

The piceatannol site is built by Y105 and K136. Trans-resveratrol is bound by residues Y105 and K136. Fe cation is bound by residues H169, H220, and H285. A piceatannol-binding site is contributed by E355. Residue E355 coordinates trans-resveratrol. H481 lines the Fe cation pocket.

The protein belongs to the carotenoid oxygenase family. Fe(2+) is required as a cofactor.

It catalyses the reaction trans-resveratrol + O2 = 3,5-dihydroxybenzaldehyde + 4-hydroxybenzaldehyde. The catalysed reaction is piceatannol + O2 = 3,5-dihydroxybenzaldehyde + 3,4-dihydroxybenzaldehyde. Its function is as follows. Dioxygenase that cleaves the interphenyl C-alpha-C-beta double bond of resveratrol to yield 3,5-dihydroxybenzaldehyde and 4-hydroxybenzaldehyde. Also cleaves piceatannol, a compound that differs from resveratrol only in the occurrence of an additional hydroxyl group, which leads to the production of 3,4-dihydroxybenzaldehyde and 3,5-hydroxybenzaldehyde. This chain is Resveratrol cleavage oxygenase 1, found in Aspergillus fumigatus (strain ATCC MYA-4609 / CBS 101355 / FGSC A1100 / Af293) (Neosartorya fumigata).